The primary structure comprises 495 residues: Probable cytochrome P450 4s3 (495 aa).

2 residues coordinate heme: glutamate 307 and cysteine 436.

Belongs to the cytochrome P450 family. Heme serves as cofactor.

The protein resides in the endoplasmic reticulum membrane. The protein localises to the microsome membrane. Functionally, may be involved in the metabolism of insect hormones and in the breakdown of synthetic insecticides. The polypeptide is Probable cytochrome P450 4s3 (Cyp4s3) (Drosophila melanogaster (Fruit fly)).